Consider the following 274-residue polypeptide: Dermonecrotic toxin LcsSicTox-betaIC1 (274 aa).

His-5 is a catalytic residue. Residues Glu-25 and Asp-27 each contribute to the Mg(2+) site. Residue His-41 is the Nucleophile of the active site. 2 disulfides stabilise this stretch: Cys-45–Cys-51 and Cys-47–Cys-190. Asn-66 is a glycosylation site (N-linked (GlcNAc...) asparagine). Residue Asp-85 participates in Mg(2+) binding.

It belongs to the arthropod phospholipase D family. Class II subfamily. Mg(2+) is required as a cofactor. As to expression, expressed by the venom gland.

Its subcellular location is the secreted. The catalysed reaction is an N-(acyl)-sphingosylphosphocholine = an N-(acyl)-sphingosyl-1,3-cyclic phosphate + choline. The enzyme catalyses an N-(acyl)-sphingosylphosphoethanolamine = an N-(acyl)-sphingosyl-1,3-cyclic phosphate + ethanolamine. It carries out the reaction a 1-acyl-sn-glycero-3-phosphocholine = a 1-acyl-sn-glycero-2,3-cyclic phosphate + choline. It catalyses the reaction a 1-acyl-sn-glycero-3-phosphoethanolamine = a 1-acyl-sn-glycero-2,3-cyclic phosphate + ethanolamine. Dermonecrotic toxins cleave the phosphodiester linkage between the phosphate and headgroup of certain phospholipids (sphingolipid and lysolipid substrates), forming an alcohol (often choline) and a cyclic phosphate. This toxin acts on sphingomyelin (SM). It may also act on ceramide phosphoethanolamine (CPE), lysophosphatidylcholine (LPC) and lysophosphatidylethanolamine (LPE), but not on lysophosphatidylserine (LPS), and lysophosphatidylglycerol (LPG). It acts by transphosphatidylation, releasing exclusively cyclic phosphate products as second products. Induces dermonecrosis, hemolysis, increased vascular permeability, edema, inflammatory response, and platelet aggregation. The sequence is that of Dermonecrotic toxin LcsSicTox-betaIC1 from Loxosceles cf. spinulosa (strain GJB-2008) (Recluse spider).